The primary structure comprises 60 residues: Large ribosomal subunit protein bL32 (60 aa).

The interval 1 to 25 is disordered; that stretch reads MAVQQNKKSPSKRGMHRSHNALNVP. Residues 9-19 are compositionally biased toward basic residues; that stretch reads SPSKRGMHRSH.

The protein belongs to the bacterial ribosomal protein bL32 family.

The chain is Large ribosomal subunit protein bL32 from Polaromonas naphthalenivorans (strain CJ2).